An 85-amino-acid polypeptide reads, in one-letter code: MKVTLIAFLTCAAVLVLHTTAAEELEAESQLMGVGMPDTELAAVDEERLFECSVSCEIEKEGNKDCKKKKCKGGWKCKSNMCVKV.

The N-terminal stretch at 1–22 (MKVTLIAFLTCAAVLVLHTTAA) is a signal peptide. Residues 23-48 (EELEAESQLMGVGMPDTELAAVDEER) constitute a propeptide that is removed on maturation. 3 cysteine pairs are disulfide-bonded: Cys-52–Cys-66, Cys-56–Cys-77, and Cys-71–Cys-82.

The protein belongs to the neurotoxin 12 (Hwtx-2) family. 02 (Hwtx-2) subfamily. As to expression, expressed by the venom gland.

Its subcellular location is the secreted. In terms of biological role, postsynaptic neurotoxin. The chain is U4-theraphotoxin-Hhn1l from Cyriopagopus hainanus (Chinese bird spider).